Here is a 200-residue protein sequence, read N- to C-terminus: UPF0637 protein LCK_01372 (200 aa).

This sequence belongs to the UPF0637 family.

The chain is UPF0637 protein LCK_01372 from Leuconostoc citreum (strain KM20).